The following is a 227-amino-acid chain: MADS-box transcription factor 25 (227 aa).

Residues 1 to 61 (MGRGKIAIKR…GRLYDFSSSS (61 aa)) enclose the MADS-box domain. The 91-residue stretch at 86 to 176 (AKFWQREVTT…RKKFNIAHQR (91 aa)) folds into the K-box domain. A disordered region spans residues 183-227 (KLNSGESTSSEQVTRSSKDPGESSTPRDSRVCIDLELSQKEVEDE). Positions 186 to 197 (SGESTSSEQVTR) are enriched in polar residues. Residues 198–227 (SSKDPGESSTPRDSRVCIDLELSQKEVEDE) are compositionally biased toward basic and acidic residues.

In terms of tissue distribution, expressed in seedling roots.

The protein localises to the nucleus. Probable transcription factor. The chain is MADS-box transcription factor 25 (MADS25) from Oryza sativa subsp. japonica (Rice).